Consider the following 330-residue polypeptide: Anthranilate phosphoribosyltransferase (330 aa).

5-phospho-alpha-D-ribose 1-diphosphate contacts are provided by residues Gly79, 82-83, Thr87, 89-92, 107-115, and Ser119; these read GD, NIST, and KHGNYGVSS. Position 79 (Gly79) interacts with anthranilate. Ser91 contacts Mg(2+). Residue Asn110 coordinates anthranilate. Arg165 contacts anthranilate. Positions 223 and 224 each coordinate Mg(2+).

Belongs to the anthranilate phosphoribosyltransferase family. As to quaternary structure, homodimer. Mg(2+) serves as cofactor.

It carries out the reaction N-(5-phospho-beta-D-ribosyl)anthranilate + diphosphate = 5-phospho-alpha-D-ribose 1-diphosphate + anthranilate. Its pathway is amino-acid biosynthesis; L-tryptophan biosynthesis; L-tryptophan from chorismate: step 2/5. Its function is as follows. Catalyzes the transfer of the phosphoribosyl group of 5-phosphorylribose-1-pyrophosphate (PRPP) to anthranilate to yield N-(5'-phosphoribosyl)-anthranilate (PRA). This chain is Anthranilate phosphoribosyltransferase, found in Flavobacterium psychrophilum (strain ATCC 49511 / DSM 21280 / CIP 103535 / JIP02/86).